Here is a 388-residue protein sequence, read N- to C-terminus: tRNA(Ile)-lysidine synthase (388 aa).

51–56 (SGGRDS) provides a ligand contact to ATP.

This sequence belongs to the tRNA(Ile)-lysidine synthase family.

It localises to the cytoplasm. The catalysed reaction is cytidine(34) in tRNA(Ile2) + L-lysine + ATP = lysidine(34) in tRNA(Ile2) + AMP + diphosphate + H(+). Its function is as follows. Ligates lysine onto the cytidine present at position 34 of the AUA codon-specific tRNA(Ile) that contains the anticodon CAU, in an ATP-dependent manner. Cytidine is converted to lysidine, thus changing the amino acid specificity of the tRNA from methionine to isoleucine. This is tRNA(Ile)-lysidine synthase from Bifidobacterium longum (strain NCC 2705).